Here is a 104-residue protein sequence, read N- to C-terminus: Circadian clock oscillator protein KaiB (104 aa).

This sequence belongs to the KaiB family. In terms of assembly, the KaiABC complex composition changes during the circadian cycle to control KaiC phosphorylation. Complexes KaiC(6), KaiA(2-4):KaiC(6), KaiB(6):KaiC(6) and KaiC(6):KaiB(6):KaiA(12) are among the most important forms, many form cooperatively. Undergoes a major conformational rearrangment; in the free state forms homotetramers as a dimer of dimers. When bound to the CI domain of KaiC switches to a monomeric thioredoxin-fold (KaiB(fs)). KaiB(fs) binds CikA, leading it to dephosphorylate phospho-RpaA.

In terms of biological role, key component of the KaiABC oscillator complex, which constitutes the main circadian regulator in cyanobacteria. Complex composition changes during the circadian cycle to control KaiC phosphorylation. KaiA stimulates KaiC autophosphorylation, while KaiB sequesters KaiA, leading to KaiC autodephosphorylation. Phospho-Ser-431 KaiC accumulation triggers binding of KaiB to form the KaiB(6):KaiC(6) complex, leading to changes in output regulators CikA and SasA. KaiB switches to a thioredoxin-like fold (KaiB(fs)) when bound to KaiC. KaiB(6):KaiC(6) formation exposes a site for KaiA binding that sequesters KaiA from KaiC, making the KaiC(6):KaiB(6):KaiA(12) complex that results in KaiC autodephosphorylation. Its function is as follows. A metamorphic protein which reversibly switches between an inactive tetrameric fold and a rare, thioredoxin-like monomeric fold (KaiB(fs)). KaiB(fs) binds phospho-KaiC, KaiA and CikA. KaiA and CikA compete for binding to KaiB(fs), and KaiB(fs) and SasA compete for binding to KaiC, thus the clock oscillator and output signal pathway are tightly coupled. The polypeptide is Circadian clock oscillator protein KaiB (Rippkaea orientalis (strain PCC 8801 / RF-1) (Cyanothece sp. (strain PCC 8801))).